Reading from the N-terminus, the 450-residue chain is Tubulin beta-1 chain (450 aa).

GTP is bound by residues glutamine 11, glutamate 69, serine 138, glycine 142, threonine 143, glycine 144, asparagine 204, and asparagine 226. Mg(2+) is bound at residue glutamate 69. The segment at 426–450 (QDATADEDEYGEEEGDEEEYGQHDI) is disordered. Residues 429 to 444 (TADEDEYGEEEGDEEE) are compositionally biased toward acidic residues.

This sequence belongs to the tubulin family. Dimer of alpha and beta chains. A typical microtubule is a hollow water-filled tube with an outer diameter of 25 nm and an inner diameter of 15 nM. Alpha-beta heterodimers associate head-to-tail to form protofilaments running lengthwise along the microtubule wall with the beta-tubulin subunit facing the microtubule plus end conferring a structural polarity. Microtubules usually have 13 protofilaments but different protofilament numbers can be found in some organisms and specialized cells. Requires Mg(2+) as cofactor.

Its subcellular location is the cytoplasm. The protein resides in the cytoskeleton. Its function is as follows. Tubulin is the major constituent of microtubules, a cylinder consisting of laterally associated linear protofilaments composed of alpha- and beta-tubulin heterodimers. Microtubules grow by the addition of GTP-tubulin dimers to the microtubule end, where a stabilizing cap forms. Below the cap, tubulin dimers are in GDP-bound state, owing to GTPase activity of alpha-tubulin. The protein is Tubulin beta-1 chain (TUBB1) of Pisum sativum (Garden pea).